The sequence spans 329 residues: Prostaglandin reductase 1 (329 aa).

Phosphothreonine is present on threonine 18. Phosphoserine is present on serine 20. NADP(+) contacts are provided by residues 152 to 155 (GAVG), lysine 178, tyrosine 193, asparagine 217, 239 to 245 (CGAISVY), 270 to 272 (FVV), and asparagine 321. At lysine 178 the chain carries N6-(2-hydroxyisobutyryl)lysine; alternate. Lysine 178 carries the N6-acetyllysine; alternate modification.

Belongs to the NADP-dependent oxidoreductase L4BD family. In terms of assembly, monomer or homodimer.

The protein resides in the cytoplasm. It carries out the reaction 13,14-dihydro-15-oxo-prostaglandin E1 + NADP(+) = 15-oxoprostaglandin E1 + NADPH + H(+). It catalyses the reaction 13,14-dihydro-15-oxo-prostaglandin E2 + NADP(+) = 15-oxoprostaglandin E2 + NADPH + H(+). The enzyme catalyses 13,14-dihydro-15-oxo-prostaglandin F1alpha + NADP(+) = 15-oxoprostaglandin F1alpha + NADPH + H(+). The catalysed reaction is 13,14-dihydro-15-oxo-PGF2alpha + NADP(+) = 15-oxoprostaglandin F2alpha + NADPH + H(+). It carries out the reaction leukotriene B4 + NADP(+) = 12-oxo-leukotriene B4 + NADPH + H(+). It catalyses the reaction 20-hydroxy-leukotriene B4 + NADP(+) = 12-oxo-20-hydroxy-leukotriene B4 + NADPH + H(+). The enzyme catalyses 6-trans-leukotriene B4 + NADP(+) = 12-oxo-(5S)-hydroxy-(6E,8E,10E,14Z)-eicosatetraenoate + NADPH + H(+). The catalysed reaction is (5S,12S)-dihydroxy-(6E,10E,12E,14Z)-eicosatetraenoate + NADP(+) = 12-oxo-(5S)-hydroxy-(6E,8E,10E,14Z)-eicosatetraenoate + NADPH + H(+). It carries out the reaction an n-alkanal + NADP(+) = an alk-2-enal + NADPH + H(+). It catalyses the reaction hexanal + NADP(+) = (E)-hex-2-enal + NADPH + H(+). The enzyme catalyses octanal + NADP(+) = (2E)-octenal + NADPH + H(+). The catalysed reaction is decanal + NADP(+) = (2E)-decenal + NADPH + H(+). It carries out the reaction dodecanal + NADP(+) = (2E)-dodecenal + NADPH + H(+). It catalyses the reaction 4-hydroxynonanal + NADP(+) = (E)-4-hydroxynon-2-enal + NADPH + H(+). The enzyme catalyses pentan-2-one + NADP(+) = (E)-pent-3-en-2-one + NADPH + H(+). The catalysed reaction is nonan-2-one + NADP(+) = (3E)-nonen-2-one + NADPH + H(+). Functionally, NAD(P)H-dependent oxidoreductase involved in metabolic inactivation of pro- and anti-inflammatory eicosanoids: prostaglandins (PG), leukotrienes (LT) and lipoxins (LX). Catalyzes with high efficiency the reduction of the 13,14 double bond of 15-oxoPGs, including 15-oxo-PGE1, 15-oxo-PGE2, 15-oxo-PGF1-alpha and 15-oxo-PGF2-alpha. Catalyzes with lower efficiency the oxidation of the hydroxyl group at C12 of LTB4 and its derivatives, converting them into biologically less active 12-oxo-LTB4 metabolites. Reduces 15-oxo-LXA4 to 13,14 dihydro-15-oxo-LXA4, enhancing neutrophil recruitment at the inflammatory site. Plays a role in metabolic detoxification of alkenals and ketones. Reduces alpha,beta-unsaturated alkenals and ketones, particularly those with medium-chain length, showing highest affinity toward (2E)-decenal and (3E)-3-nonen-2-one. May inactivate 4-hydroxy-2-nonenal, a cytotoxic lipid constituent of oxidized low-density lipoprotein particles. The protein is Prostaglandin reductase 1 (PTGR1) of Bos taurus (Bovine).